Consider the following 366-residue polypeptide: uncharacterized protein (366 aa).

The region spanning 169-280 (ILDTSVIIDG…LNKVCELQKV (112 aa)) is the PINc domain. Asp250 is a Mg(2+) binding site. Positions 295-356 (VVLPGEEMNV…LQTAAGRMIF (62 aa)) constitute a TRAM domain.

This sequence belongs to the ycf81 family. The protein in the central section; belongs to the PINc/VapC protein family. Requires Mg(2+) as cofactor.

An RNase. This is an uncharacterized protein from Bacillus subtilis (strain 168).